The following is a 133-amino-acid chain: Small ribosomal subunit protein uS12 (133 aa).

Asp89 carries the 3-methylthioaspartic acid modification. The disordered stretch occupies residues 103–133 (DTAGVAGRTQRRSKYGAKRPKPGQAAPAKKK). The segment covering 111–123 (TQRRSKYGAKRPK) has biased composition (basic residues). Low complexity predominate over residues 124-133 (PGQAAPAKKK).

The protein belongs to the universal ribosomal protein uS12 family. In terms of assembly, part of the 30S ribosomal subunit. Contacts proteins S8 and S17. May interact with IF1 in the 30S initiation complex.

With S4 and S5 plays an important role in translational accuracy. Its function is as follows. Interacts with and stabilizes bases of the 16S rRNA that are involved in tRNA selection in the A site and with the mRNA backbone. Located at the interface of the 30S and 50S subunits, it traverses the body of the 30S subunit contacting proteins on the other side and probably holding the rRNA structure together. The combined cluster of proteins S8, S12 and S17 appears to hold together the shoulder and platform of the 30S subunit. The protein is Small ribosomal subunit protein uS12 of Bacteroides thetaiotaomicron (strain ATCC 29148 / DSM 2079 / JCM 5827 / CCUG 10774 / NCTC 10582 / VPI-5482 / E50).